Reading from the N-terminus, the 703-residue chain is Phosphoribosylformylglycinamidine synthase subunit PurL (703 aa).

Histidine 36 is a catalytic residue. ATP contacts are provided by tyrosine 39 and lysine 80. Glutamate 82 is a Mg(2+) binding site. Substrate contacts are provided by residues 83–86 and arginine 105; that span reads SHNH. Catalysis depends on histidine 84, which acts as the Proton acceptor. Aspartate 106 is a Mg(2+) binding site. Glutamine 226 is a binding site for substrate. A Mg(2+)-binding site is contributed by aspartate 252. 294–296 lines the substrate pocket; that stretch reads ETQ. ATP-binding residues include aspartate 468 and glycine 505. Residue serine 508 participates in substrate binding.

This sequence belongs to the FGAMS family. In terms of assembly, monomer. Part of the FGAM synthase complex composed of 1 PurL, 1 PurQ and 2 PurS subunits.

It is found in the cytoplasm. The catalysed reaction is N(2)-formyl-N(1)-(5-phospho-beta-D-ribosyl)glycinamide + L-glutamine + ATP + H2O = 2-formamido-N(1)-(5-O-phospho-beta-D-ribosyl)acetamidine + L-glutamate + ADP + phosphate + H(+). The protein operates within purine metabolism; IMP biosynthesis via de novo pathway; 5-amino-1-(5-phospho-D-ribosyl)imidazole from N(2)-formyl-N(1)-(5-phospho-D-ribosyl)glycinamide: step 1/2. Part of the phosphoribosylformylglycinamidine synthase complex involved in the purines biosynthetic pathway. Catalyzes the ATP-dependent conversion of formylglycinamide ribonucleotide (FGAR) and glutamine to yield formylglycinamidine ribonucleotide (FGAM) and glutamate. The FGAM synthase complex is composed of three subunits. PurQ produces an ammonia molecule by converting glutamine to glutamate. PurL transfers the ammonia molecule to FGAR to form FGAM in an ATP-dependent manner. PurS interacts with PurQ and PurL and is thought to assist in the transfer of the ammonia molecule from PurQ to PurL. In Sulfurisphaera tokodaii (strain DSM 16993 / JCM 10545 / NBRC 100140 / 7) (Sulfolobus tokodaii), this protein is Phosphoribosylformylglycinamidine synthase subunit PurL.